A 189-amino-acid chain; its full sequence is Coatomer subunit zeta (189 aa).

It belongs to the adaptor complexes small subunit family. In terms of assembly, oligomeric complex that consists of at least the alpha, beta, beta', gamma, delta, epsilon and zeta subunits.

Its subcellular location is the cytoplasm. The protein localises to the golgi apparatus membrane. The protein resides in the cytoplasmic vesicle. It is found in the COPI-coated vesicle membrane. The coatomer is a cytosolic protein complex that binds to dilysine motifs and reversibly associates with Golgi non-clathrin-coated vesicles, which further mediate biosynthetic protein transport from the ER, via the Golgi up to the trans Golgi network. Coatomer complex is required for budding from Golgi membranes, and is essential for the retrograde Golgi-to-ER transport of dilysine-tagged proteins. The zeta subunit may be involved in regulating the coat assembly and, hence, the rate of biosynthetic protein transport due to its association-dissociation properties with the coatomer complex. This Saccharomyces cerevisiae (strain ATCC 204508 / S288c) (Baker's yeast) protein is Coatomer subunit zeta (RET3).